The primary structure comprises 170 residues: Putative 4-hydroxy-4-methyl-2-oxoglutarate aldolase (170 aa).

Substrate contacts are provided by residues 85–88 (GDMI) and Arg107. Asp108 contributes to the a divalent metal cation binding site.

It belongs to the class II aldolase/RraA-like family. As to quaternary structure, homotrimer. It depends on a divalent metal cation as a cofactor.

The catalysed reaction is 4-hydroxy-4-methyl-2-oxoglutarate = 2 pyruvate. It carries out the reaction oxaloacetate + H(+) = pyruvate + CO2. Functionally, catalyzes the aldol cleavage of 4-hydroxy-4-methyl-2-oxoglutarate (HMG) into 2 molecules of pyruvate. Also contains a secondary oxaloacetate (OAA) decarboxylase activity due to the common pyruvate enolate transition state formed following C-C bond cleavage in the retro-aldol and decarboxylation reactions. This chain is Putative 4-hydroxy-4-methyl-2-oxoglutarate aldolase, found in Acinetobacter baylyi (strain ATCC 33305 / BD413 / ADP1).